The following is a 207-amino-acid chain: Flavin-dependent thymidylate synthase (207 aa).

One can recognise a ThyX domain in the interval 1-204 (MQITLLFHTP…KFIFEHCLHK (204 aa)). FAD-binding positions include Ser50 and 74–76 (RHR). DUMP is bound by residues 71 to 74 (EVAR), 84 to 86 (STR), and Lys143. Positions 74–84 (RHRHTSPSVKS) match the ThyX motif motif. FAD is bound by residues 159–161 (NAR) and Asn165. A dUMP-binding site is contributed by Arg170. Arg170 functions as the Involved in ionization of N3 of dUMP, leading to its activation in the catalytic mechanism.

This sequence belongs to the thymidylate synthase ThyX family. As to quaternary structure, homotetramer. The cofactor is FAD.

It carries out the reaction dUMP + (6R)-5,10-methylene-5,6,7,8-tetrahydrofolate + NADPH + H(+) = dTMP + (6S)-5,6,7,8-tetrahydrofolate + NADP(+). Its pathway is pyrimidine metabolism; dTTP biosynthesis. Functionally, catalyzes the reductive methylation of 2'-deoxyuridine-5'-monophosphate (dUMP) to 2'-deoxythymidine-5'-monophosphate (dTMP) while utilizing 5,10-methylenetetrahydrofolate (mTHF) as the methyl donor, and NADPH and FADH(2) as the reductant. This is Flavin-dependent thymidylate synthase from Campylobacter jejuni subsp. jejuni serotype O:2 (strain ATCC 700819 / NCTC 11168).